A 234-amino-acid chain; its full sequence is Transcription factor ILR3 (234 aa).

Residues 34 to 85 (QPIGVSSNSSAGVDGSAGNSEASKEPGSKKRGRCESSSATSSKACREKQRRD) form a disordered region. A compositionally biased stretch (polar residues) spans 36 to 54 (IGVSSNSSAGVDGSAGNSE). The bHLH domain occupies 71 to 122 (SATSSKACREKQRRDRLNDKFMELGAILEPGNPPKTDKAAILVDAVRMVTQL).

Homodimer. Interacts with BTS and BHLH47/PYE. In terms of tissue distribution, widely expressed throughout development, mostly in vasculatures.

Its subcellular location is the nucleus. Transcription factor. Plays a role in resistance to amide-linked indole-3-acetic acid (IAA) conjugates such as IAA-Leu and IAA-Phe. May regulate gene expression in response to metal homeostasis changes. This is Transcription factor ILR3 (ILR3) from Arabidopsis thaliana (Mouse-ear cress).